A 261-amino-acid chain; its full sequence is Potassium/proton antiporter CemA (261 aa).

3 helical membrane passes run 138–158 (IISHLLANLIGLVLLSVCLIL), 186–206 (ILLVTDLCIGFHSPHGWELMI), and 221–241 (IISGLVSTFPVILDTIFKYWI).

This sequence belongs to the CemA family.

Its subcellular location is the plastid. The protein localises to the chloroplast inner membrane. It carries out the reaction K(+)(in) + H(+)(out) = K(+)(out) + H(+)(in). Functionally, contributes to K(+)/H(+) antiport activity by supporting proton efflux to control proton extrusion and homeostasis in chloroplasts in a light-dependent manner to modulate photosynthesis. Prevents excessive induction of non-photochemical quenching (NPQ) under continuous-light conditions. Indirectly promotes efficient inorganic carbon uptake into chloroplasts. The polypeptide is Potassium/proton antiporter CemA (Cryptomeria japonica (Japanese cedar)).